Consider the following 415-residue polypeptide: Tyrosine--tRNA ligase (415 aa).

Tyr34 contributes to the L-tyrosine binding site. Residues 39–48 (PSADSLHLGN) carry the 'HIGH' region motif. L-tyrosine-binding residues include Tyr162 and Gln166. The short motif at 224 to 228 (KFGKS) is the 'KMSKS' region element. Lys227 is an ATP binding site. The region spanning 346–413 (IKIIDLLNLA…KRNYFLIVWN (68 aa)) is the S4 RNA-binding domain.

The protein belongs to the class-I aminoacyl-tRNA synthetase family. TyrS type 1 subfamily. Homodimer.

The protein localises to the cytoplasm. The enzyme catalyses tRNA(Tyr) + L-tyrosine + ATP = L-tyrosyl-tRNA(Tyr) + AMP + diphosphate + H(+). Functionally, catalyzes the attachment of tyrosine to tRNA(Tyr) in a two-step reaction: tyrosine is first activated by ATP to form Tyr-AMP and then transferred to the acceptor end of tRNA(Tyr). This Ureaplasma urealyticum serovar 10 (strain ATCC 33699 / Western) protein is Tyrosine--tRNA ligase.